The sequence spans 270 residues: uncharacterized protein (270 aa).

Residues 1–37 lie on the Cytoplasmic side of the membrane; it reads MATHTSKRRIHRWENNELSEENSTIIYFPARGLMWTH. Residues 38-58 form a helical membrane-spanning segment; it reads FPFVLGICLEFVGYVLKIVFI. Topologically, residues 59–65 are extracellular; the sequence is NSPSIST. Residues 66-86 traverse the membrane as a helical segment; it reads FIAQSVLLLIAPSLYALSIFM. The Cytoplasmic segment spans residues 87 to 93; the sequence is LFSKMAR. The chain crosses the membrane as a helical span at residues 94 to 114; that stretch reads LILMEAYMLIPAKFSTVSFVV. Residues 115–140 are Extracellular-facing; it reads ADMIGRVLQAVGGGLLSSWNSRNTGR. Residues 141–161 traverse the membrane as a helical segment; it reads ILIIVGLFIQIFCYTFLTFSQ. Residues 162–181 lie on the Cytoplasmic side of the membrane; that stretch reads LFLHYKMKATPSKIVRDSNE. Residues 182–202 form a helical membrane-spanning segment; the sequence is WFQYNFILLAGILLVNGRTIV. Topologically, residues 203 to 220 are extracellular; that stretch reads RVVQFLMGLQSYIGQHEW. The chain crosses the membrane as a helical span at residues 221–241; sequence CLYVFDTVLMFLLPLIFLATF. The Cytoplasmic portion of the chain corresponds to 242–270; it reads RARNLFKLQDKSVNIQLNKLLDKESVSED.

This sequence belongs to the lipid-translocating exporter (LTE) (TC 9.A.26.1) family.

It localises to the membrane. This is an uncharacterized protein from Saccharomyces cerevisiae (strain ATCC 204508 / S288c) (Baker's yeast).